The chain runs to 78 residues: Putative antitoxin VapB4 (78 aa).

The protein belongs to the UPF0330 family.

Functionally, possibly the antitoxin component of a type II toxin-antitoxin (TA) system. Its cognate toxin is VapC4 (Potential). The chain is Putative antitoxin VapB4 (vapB4) from Pyrococcus furiosus (strain ATCC 43587 / DSM 3638 / JCM 8422 / Vc1).